The chain runs to 233 residues: Ribonuclease 3 (233 aa).

In terms of domain architecture, RNase III spans 4 to 126 (LNKLMERLGH…IVGAIYIDAG (123 aa)). Residue Glu-39 participates in Mg(2+) binding. Residue Asp-43 is part of the active site. Mg(2+) contacts are provided by Asp-112 and Glu-115. Glu-115 is a catalytic residue. One can recognise a DRBM domain in the interval 153–222 (DAKSLLQEWL…AKRFLELLDD (70 aa)).

The protein belongs to the ribonuclease III family. As to quaternary structure, homodimer. Mg(2+) is required as a cofactor.

It is found in the cytoplasm. It catalyses the reaction Endonucleolytic cleavage to 5'-phosphomonoester.. In terms of biological role, digests double-stranded RNA. Involved in the processing of primary rRNA transcript to yield the immediate precursors to the large and small rRNAs (23S and 16S). Processes some mRNAs, and tRNAs when they are encoded in the rRNA operon. Processes pre-crRNA and tracrRNA of type II CRISPR loci if present in the organism. This chain is Ribonuclease 3, found in Coxiella burnetii (strain RSA 331 / Henzerling II).